A 253-amino-acid chain; its full sequence is Coenzyme F420:L-glutamate ligase (253 aa).

GTP-binding positions include 9–12 (LPEI), 38–39 (ST), and K43. D113 contributes to the a divalent metal cation binding site. GTP is bound at residue N116. A divalent metal cation contacts are provided by D150, T151, and E208. 206–213 (SGEGDDGT) provides a ligand contact to GTP.

It belongs to the CofE family. Homodimer. It depends on Mg(2+) as a cofactor. Mn(2+) serves as cofactor. The cofactor is K(+).

The enzyme catalyses oxidized coenzyme F420-0 + GTP + L-glutamate = oxidized coenzyme F420-1 + GDP + phosphate + H(+). It carries out the reaction oxidized coenzyme F420-1 + GTP + L-glutamate = oxidized coenzyme F420-2 + GDP + phosphate + H(+). It functions in the pathway cofactor biosynthesis; coenzyme F420 biosynthesis. Catalyzes the GTP-dependent successive addition of two or more gamma-linked L-glutamates to the L-lactyl phosphodiester of 7,8-didemethyl-8-hydroxy-5-deazariboflavin (F420-0) to form coenzyme F420-0-glutamyl-glutamate (F420-2) or polyglutamated F420 derivatives. This is Coenzyme F420:L-glutamate ligase from Halobacterium salinarum (strain ATCC 29341 / DSM 671 / R1).